The sequence spans 283 residues: Protein/nucleic acid deglycase HchA (283 aa).

His-86, Glu-91, and His-123 together coordinate Zn(2+). Cys-185 (nucleophile) is an active-site residue.

Belongs to the peptidase C56 family. HchA subfamily. In terms of assembly, homodimer.

The protein localises to the cytoplasm. It catalyses the reaction N(omega)-(1-hydroxy-2-oxopropyl)-L-arginyl-[protein] + H2O = lactate + L-arginyl-[protein] + H(+). It carries out the reaction N(6)-(1-hydroxy-2-oxopropyl)-L-lysyl-[protein] + H2O = lactate + L-lysyl-[protein] + H(+). The enzyme catalyses S-(1-hydroxy-2-oxopropyl)-L-cysteinyl-[protein] + H2O = lactate + L-cysteinyl-[protein] + H(+). The catalysed reaction is N(omega)-(1-hydroxy-2-oxoethyl)-L-arginyl-[protein] + H2O = L-arginyl-[protein] + glycolate + H(+). It catalyses the reaction N(6)-(1-hydroxy-2-oxoethyl)-L-lysyl-[protein] + H2O = glycolate + L-lysyl-[protein] + H(+). It carries out the reaction S-(1-hydroxy-2-oxoethyl)-L-cysteinyl-[protein] + H2O = glycolate + L-cysteinyl-[protein] + H(+). The enzyme catalyses N(2)-(1-hydroxy-2-oxopropyl)-dGTP + H2O = lactate + dGTP + H(+). The catalysed reaction is N(2)-(1-hydroxy-2-oxopropyl)-GTP + H2O = lactate + GTP + H(+). It catalyses the reaction N(2)-(1-hydroxy-2-oxopropyl)-GDP + H2O = lactate + GDP + H(+). It carries out the reaction N(2)-(1-hydroxy-2-oxopropyl)-GMP + H2O = lactate + GMP + H(+). The enzyme catalyses N(2)-(1-hydroxy-2-oxoethyl)-dGTP + H2O = dGTP + glycolate + H(+). The catalysed reaction is N(2)-(1-hydroxy-2-oxoethyl)-GTP + H2O = glycolate + GTP + H(+). It catalyses the reaction N(2)-(1-hydroxy-2-oxoethyl)-GDP + H2O = glycolate + GDP + H(+). It carries out the reaction N(2)-(1-hydroxy-2-oxoethyl)-GMP + H2O = glycolate + GMP + H(+). The enzyme catalyses an N(2)-(1-hydroxy-2-oxopropyl)-guanosine in RNA + H2O = a guanosine in RNA + lactate + H(+). The catalysed reaction is an N(2)-(1-hydroxy-2-oxopropyl)-2'-deoxyguanosine in DNA + H2O = a 2'-deoxyguanosine in DNA + lactate + H(+). It catalyses the reaction an N(2)-(1-hydroxy-2-oxoethyl)-guanosine in RNA + H2O = a guanosine in RNA + glycolate + H(+). It carries out the reaction an N(2)-(1-hydroxy-2-oxoethyl)-2'-deoxyguanosine in DNA + H2O = a 2'-deoxyguanosine in DNA + glycolate + H(+). Functionally, protein and nucleotide deglycase that catalyzes the deglycation of the Maillard adducts formed between amino groups of proteins or nucleotides and reactive carbonyl groups of glyoxals. Thus, functions as a protein deglycase that repairs methylglyoxal- and glyoxal-glycated proteins, and releases repaired proteins and lactate or glycolate, respectively. Deglycates cysteine, arginine and lysine residues in proteins, and thus reactivates these proteins by reversing glycation by glyoxals. Acts on early glycation intermediates (hemithioacetals and aminocarbinols), preventing the formation of Schiff bases and advanced glycation endproducts (AGE). Also functions as a nucleotide deglycase able to repair glycated guanine in the free nucleotide pool (GTP, GDP, GMP, dGTP) and in DNA and RNA. Is thus involved in a major nucleotide repair system named guanine glycation repair (GG repair), dedicated to reversing methylglyoxal and glyoxal damage via nucleotide sanitization and direct nucleic acid repair. Plays an important role in protecting cells from carbonyl stress. This is Protein/nucleic acid deglycase HchA from Escherichia coli O81 (strain ED1a).